The primary structure comprises 277 residues: 2,5-diketo-D-gluconic acid reductase B (277 aa).

Tyrosine 51 acts as the Proton donor in catalysis. Histidine 109 lines the substrate pocket. NADP(+) is bound at residue 189-242 (SPLARRSELLTEQLLQELAVVYGVTPTQVVLRWHVQLGSTPIPKSADPDRQREN).

Belongs to the aldo/keto reductase family.

It localises to the cytoplasm. It carries out the reaction 2-dehydro-D-gluconate + NADP(+) = 2,5-didehydro-D-gluconate + NADPH + H(+). Catalyzes the reduction of 2,5-diketo-D-gluconic acid (25DKG) to 2-keto-L-gulonic acid (2KLG). 25DKGR-B has higher catalytic efficiency than 25DKGR-A. In Corynebacterium sp. (strain SHS752001), this protein is 2,5-diketo-D-gluconic acid reductase B (dkgB).